A 121-amino-acid polypeptide reads, in one-letter code: uncharacterized protein (121 aa).

The signal sequence occupies residues 1-23 (MNFSTVFQAIIAVLGLTTVTALA). N-linked (GlcNAc...) asparagine glycosylation is found at asparagine 68 and asparagine 84.

N-glycosylated.

This is an uncharacterized protein from Saccharomyces cerevisiae (strain ATCC 204508 / S288c) (Baker's yeast).